A 100-amino-acid polypeptide reads, in one-letter code: Large ribosomal subunit protein uL23 (100 aa).

Belongs to the universal ribosomal protein uL23 family. In terms of assembly, part of the 50S ribosomal subunit. Contacts protein L29, and trigger factor when it is bound to the ribosome.

Its function is as follows. One of the early assembly proteins it binds 23S rRNA. One of the proteins that surrounds the polypeptide exit tunnel on the outside of the ribosome. Forms the main docking site for trigger factor binding to the ribosome. The sequence is that of Large ribosomal subunit protein uL23 from Parasynechococcus marenigrum (strain WH8102).